The chain runs to 254 residues: tRNA threonylcarbamoyladenosine dehydratase (254 aa).

This sequence belongs to the HesA/MoeB/ThiF family.

Functionally, catalyzes the ATP-dependent dehydration of threonylcarbamoyladenosine at position 37 (t(6)A37) to form cyclic t(6)A37 (ct(6)A37) in tRNAs that read codons beginning with adenine. The protein is tRNA threonylcarbamoyladenosine dehydratase (tcdA) of Bacillus subtilis (strain 168).